The chain runs to 468 residues: Hydroxymethylglutaryl-CoA synthase B (468 aa).

The active-site Proton donor/acceptor is E85. C119 serves as the catalytic Acyl-thioester intermediate. Residues C119, T161, S211, H250, K259, N327, and S359 each coordinate (3S)-3-hydroxy-3-methylglutaryl-CoA. H250 (proton donor/acceptor) is an active-site residue.

Belongs to the thiolase-like superfamily. HMG-CoA synthase family.

The catalysed reaction is acetoacetyl-CoA + acetyl-CoA + H2O = (3S)-3-hydroxy-3-methylglutaryl-CoA + CoA + H(+). The protein operates within metabolic intermediate biosynthesis; (R)-mevalonate biosynthesis; (R)-mevalonate from acetyl-CoA: step 2/3. Functionally, condenses acetyl-CoA with acetoacetyl-CoA to form HMG-CoA, which is the substrate for HMG-CoA reductase. The polypeptide is Hydroxymethylglutaryl-CoA synthase B (hgsB) (Dictyostelium discoideum (Social amoeba)).